A 357-amino-acid chain; its full sequence is Protein-arginine kinase (357 aa).

A Phosphagen kinase C-terminal domain is found at 24–256 (VIISSRVRLA…LQLVTQERAA (233 aa)). Residues 27–31 (SSRVR), His93, Arg127, 178–182 (RASVM), and 209–214 (RGLYGE) each bind ATP. Residues 339 to 344 (RDIFRA) carry the RDXXRA motif of the pArg binding pocket involved in allosteric regulation motif.

The protein belongs to the ATP:guanido phosphotransferase family.

The catalysed reaction is L-arginyl-[protein] + ATP = N(omega)-phospho-L-arginyl-[protein] + ADP + H(+). Its activity is regulated as follows. Appears to be allosterically activated by the binding of pArg-containing polypeptides to the pArg-binding pocket localized in the C-terminal domain of McsB. Its function is as follows. Catalyzes the specific phosphorylation of arginine residues in proteins. This chain is Protein-arginine kinase, found in Desulforamulus reducens (strain ATCC BAA-1160 / DSM 100696 / MI-1) (Desulfotomaculum reducens).